The chain runs to 322 residues: Deoxycytidylate deaminase (322 aa).

The region spanning S173–L311 is the CMP/dCMP-type deaminase domain. H246 provides a ligand contact to Zn(2+). The active-site Proton donor is E248. Zn(2+) is bound by residues C273 and C276.

The protein belongs to the cytidine and deoxycytidylate deaminase family. Zn(2+) is required as a cofactor.

The protein localises to the cytoplasm. Its subcellular location is the nucleus. It catalyses the reaction dCMP + H2O + H(+) = dUMP + NH4(+). Supplies the nucleotide substrate for thymidylate synthetase. This is Deoxycytidylate deaminase from Schizosaccharomyces pombe (strain 972 / ATCC 24843) (Fission yeast).